Here is a 419-residue protein sequence, read N- to C-terminus: Zinc finger protein Pegasus (419 aa).

Residue Lys5 forms a Glycyl lysine isopeptide (Lys-Gly) (interchain with G-Cter in SUMO2) linkage. 3 C2H2-type zinc fingers span residues 82–104 (LKCR…IRIH), 110–132 (HRCH…MRSH), and 138–161 (YKCE…RRKH). Residue Lys185 forms a Glycyl lysine isopeptide (Lys-Gly) (interchain with G-Cter in SUMO2) linkage. Polar residues-rich tracts occupy residues 223-236 (QTDS…TTPT) and 262-273 (LSSLPPENQNPA). Disordered regions lie at residues 223-247 (QTDS…QELM) and 262-356 (LSSL…PALP). Residues 290–311 (QPSTQAVVSAVSASIPQSSSPT) are compositionally biased toward low complexity. The segment covering 332–349 (SEPSAHTSTPSIGNSQPS) has biased composition (polar residues). 2 C2H2-type zinc fingers span residues 364-386 (HHCQ…MGCH) and 392-416 (FQCN…RGQH).

Belongs to the Ikaros C2H2-type zinc-finger protein family. Self-associates. Interacts with other family members; IKZF1, IKZF2, IKZF3 and IKZF4. As to expression, expressed in brain, heart, skeletal muscle, kidney, and liver. Expressed in the hematopoietic cell lines MOLT-4, NALM-6 and K-562. Highly expressed in THP-1 and M-07e cell lines, which have characteristics of myeloid and early megakaryocytic cells respectively.

The protein localises to the nucleus. Transcriptional repressor that binds the core 5'GNNTGTNG-3' DNA consensus sequence. Involved in megakaryocyte differentiation. This Homo sapiens (Human) protein is Zinc finger protein Pegasus (IKZF5).